We begin with the raw amino-acid sequence, 249 residues long: ATP synthase subunit a (249 aa).

Helical transmembrane passes span 35–55 (ILLT…ISSL), 92–112 (VPFI…GALV), 131–151 (INTT…AGIS), 187–209 (LFGN…PLFI), and 221–241 (SAIQ…EALE).

The protein belongs to the ATPase A chain family. As to quaternary structure, F-type ATPases have 2 components, CF(1) - the catalytic core - and CF(0) - the membrane proton channel. CF(1) has five subunits: alpha(3), beta(3), gamma(1), delta(1), epsilon(1). CF(0) has four main subunits: a, b, b' and c.

Its subcellular location is the cellular thylakoid membrane. In terms of biological role, key component of the proton channel; it plays a direct role in the translocation of protons across the membrane. The chain is ATP synthase subunit a from Trichodesmium erythraeum (strain IMS101).